A 407-amino-acid chain; its full sequence is MLGMLRWTTAGESHGQALVATVEHMPAGVPVTKDEVTYQLARRRLGYGRGARMKFEQDKLTFLTGIRHGLTLGSPISIVIGNSEWPKWTTIMSSDALDMEDPENVAAMSSGRGAKLTRPRPGHADFAGMLKYGFDDARNVLERSSARETAARVAAATVARSFLRETLGVEVLSHVVSIGRSEPYEGPTPTFADITAIDESPVRSFGKEAEASMITEIEAAKKSGDTLGGIVEVIVEGLPIGLGSHISGEDRLDAQLAAALMGIQAIKGVEIGDGFEEARRRGSEAHDEMVRDEDGVYRTTNRAGGLEGGMTNGETLRVRAAMKPISTVPRALKTVDMATGDAATGIHQRSDVCAVPAAGVVAEAMVALVLARAVLNKFGGDSLEETTCNIRCYLERIGKRLEFNDGE.

2 residues coordinate NADP(+): Arg43 and Arg49. Residues 143–145 (RSS), 264–265 (QA), Gly308, 323–327 (KPIST), and Arg349 each bind FMN.

Belongs to the chorismate synthase family. Homotetramer. FMNH2 is required as a cofactor.

It catalyses the reaction 5-O-(1-carboxyvinyl)-3-phosphoshikimate = chorismate + phosphate. Its pathway is metabolic intermediate biosynthesis; chorismate biosynthesis; chorismate from D-erythrose 4-phosphate and phosphoenolpyruvate: step 7/7. Its function is as follows. Catalyzes the anti-1,4-elimination of the C-3 phosphate and the C-6 proR hydrogen from 5-enolpyruvylshikimate-3-phosphate (EPSP) to yield chorismate, which is the branch point compound that serves as the starting substrate for the three terminal pathways of aromatic amino acid biosynthesis. This reaction introduces a second double bond into the aromatic ring system. The chain is Chorismate synthase from Corynebacterium efficiens (strain DSM 44549 / YS-314 / AJ 12310 / JCM 11189 / NBRC 100395).